The sequence spans 267 residues: Protein I267L (267 aa).

This sequence belongs to the asfivirus I267L family.

The chain is Protein I267L from African swine fever virus (isolate Tick/Malawi/Lil 20-1/1983) (ASFV).